We begin with the raw amino-acid sequence, 246 residues long: Bis(5'-nucleosyl)-tetraphosphatase PrpE [asymmetrical] (246 aa).

Belongs to the PrpE family. It depends on Ni(2+) as a cofactor.

It carries out the reaction P(1),P(4)-bis(5'-guanosyl) tetraphosphate + H2O = GMP + GTP + 2 H(+). Its function is as follows. Asymmetrically hydrolyzes Ap4p to yield AMP and ATP. The chain is Bis(5'-nucleosyl)-tetraphosphatase PrpE [asymmetrical] from Bacillus thuringiensis subsp. konkukian (strain 97-27).